Consider the following 746-residue polypeptide: Actin filament-associated protein 1-like 1 (746 aa).

Residues 88–206 (EDQKKEPEAN…RLTHQWPSEE (119 aa)) are disordered. The span at 98–107 (HTVTKPSKTD) shows a compositional bias: polar residues. Residues 108–119 (SPPPLPNTPPPE) show a composition bias toward pro residues. The segment covering 139–148 (SRSSSSPPNS) has biased composition (low complexity). One can recognise a PH 1 domain in the interval 214–310 (DCHICAFLLR…WLHVVRDVTG (97 aa)). Positions 336-371 (EKQTSDSDSMPSGESARDIRENGKPKRGALSELTGT) are disordered. Residues 350 to 359 (SARDIRENGK) show a composition bias toward basic and acidic residues. The PH 2 domain maps to 406-497 (RCGYVGVLVN…WLGVLLAETG (92 aa)). 2 disordered regions span residues 539 to 596 (EVPF…TRAQ) and 723 to 746 (PSIY…KKGT). Residues 562–575 (SFSSSDTGKPSPQI) are compositionally biased toward polar residues. Residues 591–682 (GKTRAQEDAR…VKENLKKSLA (92 aa)) adopt a coiled-coil conformation. Residues 736–746 (KAKEWESKKGT) are compositionally biased toward basic and acidic residues.

The protein resides in the cytoplasm. It is found in the cell projection. It localises to the podosome. The protein localises to the invadopodium. Its subcellular location is the cytoskeleton. The protein resides in the stress fiber. May be involved in podosome and invadosome formation. The sequence is that of Actin filament-associated protein 1-like 1 (afap1l1) from Danio rerio (Zebrafish).